The primary structure comprises 207 residues: Vascular endothelial growth factor B (207 aa).

Positions 1 to 21 (MSPLLRRLLLAALLQLAPAQA) are cleaved as a signal peptide. 3 cysteine pairs are disulfide-bonded: cysteine 47–cysteine 89, cysteine 78–cysteine 122, and cysteine 82–cysteine 124. A compositionally biased stretch (basic and acidic residues) spans 122 to 139 (CECRPKKKDSAVKPDRAA). A disordered region spans residues 122-207 (CECRPKKKDS…AASSVAKGGA (86 aa)). Over residues 174-207 (PSAHAAPSTTSALTPGPAAAAADAAASSVAKGGA) the composition is skewed to low complexity.

It belongs to the PDGF/VEGF growth factor family. In terms of assembly, homodimer; disulfide-linked. Can also form heterodimer with VEGF. In terms of processing, VEGF-B186 is O-glycosylated. Expressed in all tissues except liver. Highest levels found in heart, skeletal muscle and pancreas.

It is found in the secreted. Functionally, growth factor for endothelial cells. VEGF-B167 binds heparin and neuropilin-1 whereas the binding to neuropilin-1 of VEGF-B186 is regulated by proteolysis. The sequence is that of Vascular endothelial growth factor B (VEGFB) from Homo sapiens (Human).